We begin with the raw amino-acid sequence, 59 residues long: Small, acid-soluble spore protein H 2 (59 aa).

This sequence belongs to the SspH family.

The protein localises to the spore core. In Bacillus cereus (strain ATCC 14579 / DSM 31 / CCUG 7414 / JCM 2152 / NBRC 15305 / NCIMB 9373 / NCTC 2599 / NRRL B-3711), this protein is Small, acid-soluble spore protein H 2 (sspH2).